We begin with the raw amino-acid sequence, 248 residues long: UDP-2,3-diacylglucosamine hydrolase (248 aa).

Positions 7, 9, 40, 78, and 113 each coordinate Mn(2+). 78-79 contributes to the substrate binding site; sequence NR. Substrate contacts are provided by D121, S159, T163, K166, and H194. Residues H194 and H196 each contribute to the Mn(2+) site.

The protein belongs to the LpxH family. It depends on Mn(2+) as a cofactor.

Its subcellular location is the cell inner membrane. It carries out the reaction UDP-2-N,3-O-bis[(3R)-3-hydroxytetradecanoyl]-alpha-D-glucosamine + H2O = 2-N,3-O-bis[(3R)-3-hydroxytetradecanoyl]-alpha-D-glucosaminyl 1-phosphate + UMP + 2 H(+). It participates in glycolipid biosynthesis; lipid IV(A) biosynthesis; lipid IV(A) from (3R)-3-hydroxytetradecanoyl-[acyl-carrier-protein] and UDP-N-acetyl-alpha-D-glucosamine: step 4/6. Hydrolyzes the pyrophosphate bond of UDP-2,3-diacylglucosamine to yield 2,3-diacylglucosamine 1-phosphate (lipid X) and UMP by catalyzing the attack of water at the alpha-P atom. Involved in the biosynthesis of lipid A, a phosphorylated glycolipid that anchors the lipopolysaccharide to the outer membrane of the cell. The protein is UDP-2,3-diacylglucosamine hydrolase of Pseudomonas savastanoi pv. phaseolicola (strain 1448A / Race 6) (Pseudomonas syringae pv. phaseolicola (strain 1448A / Race 6)).